Reading from the N-terminus, the 151-residue chain is Protein INO4 (151 aa).

The bHLH domain occupies glutamine 45 to leucine 97. The disordered stretch occupies residues histidine 112 to proline 137. Polar residues predominate over residues threonine 116 to asparagine 131.

As to quaternary structure, efficient DNA binding requires dimerization with another bHLH protein.

It is found in the nucleus. Transcriptional activator of phospholipid synthetic genes (such as INO1, CHO1/PSS, CHO2/PEM1, OPI3/PEM2, etc.). This Saccharomyces cerevisiae (strain ATCC 204508 / S288c) (Baker's yeast) protein is Protein INO4 (INO4).